The chain runs to 711 residues: Polyribonucleotide nucleotidyltransferase (711 aa).

2 residues coordinate Mg(2+): D486 and D492. A KH domain is found at 553–612; that stretch reads PRIHTIKINPDKIKDVIGKGGSVIRALTEETGTTIEIEDDGTVKIAATDGEKAKHAIRRI. The S1 motif domain maps to 622–690; sequence GRVYTGKVTR…RQGRIRLSIK (69 aa). A disordered region spans residues 689-711; that stretch reads IKEATEQSQPAAAPEAPAAEQGE. Low complexity predominate over residues 694-711; the sequence is EQSQPAAAPEAPAAEQGE.

The protein belongs to the polyribonucleotide nucleotidyltransferase family. In terms of assembly, component of the RNA degradosome, which is a multiprotein complex involved in RNA processing and mRNA degradation. Mg(2+) serves as cofactor.

The protein resides in the cytoplasm. It carries out the reaction RNA(n+1) + phosphate = RNA(n) + a ribonucleoside 5'-diphosphate. In terms of biological role, involved in mRNA degradation. Catalyzes the phosphorolysis of single-stranded polyribonucleotides processively in the 3'- to 5'-direction. The protein is Polyribonucleotide nucleotidyltransferase of Shigella flexneri serotype 5b (strain 8401).